We begin with the raw amino-acid sequence, 971 residues long: Serine/threonine-protein kinase CLA4 (971 aa).

A disordered region spans residues 1 to 40 (MTSIYTSDLKNHRRAPPPPNGAAGSGSGSGSGSGSGSGSL). Gly residues predominate over residues 23–37 (AGSGSGSGSGSGSGS). A PH domain is found at 67–178 (SKRQSGWVHV…WLDAFTTKCP (112 aa)). Residues 201–221 (LTNGSLNGNSSSSPTSGLLSS) form a disordered region. Positions 231-244 (VSGPINFTHKVHVG) constitute a CRIB domain. Disordered stretches follow at residues 292–517 (GGNS…KIHP) and 554–653 (SKKS…QLKK). Composition is skewed to low complexity over residues 307–326 (NSKT…TKNN) and 365–404 (LNGS…PLNN). Positions 423–433 (SGTSSDTYSNK) are enriched in polar residues. Positions 434–448 (NHQDRSGYEQQRQQR) are enriched in basic and acidic residues. Residues 449–482 (TDSSQQQQQQKQHQYQQKSQQQQQQPQQPLSSHQ) show a composition bias toward low complexity. A compositionally biased stretch (pro residues) spans 491–500 (QVPPTLPSSG). The span at 554–578 (SKKSQQQLASKQPSPPSSQQQQQKP) shows a compositional bias: low complexity. Positions 617 to 630 (NETSGVSKTPSPTD) are enriched in polar residues. One can recognise a Protein kinase domain in the interval 680-935 (FRIVEKAGQG…TDELLEHSFI (256 aa)). ATP-binding positions include 686 to 694 (AGQGASGNV) and lysine 710. The active-site Proton acceptor is aspartate 803.

Belongs to the protein kinase superfamily. STE Ser/Thr protein kinase family. STE20 subfamily.

It carries out the reaction L-seryl-[protein] + ATP = O-phospho-L-seryl-[protein] + ADP + H(+). The catalysed reaction is L-threonyl-[protein] + ATP = O-phospho-L-threonyl-[protein] + ADP + H(+). Functionally, essential for virulence and morphological switching (hyphal formation) of C.albicans. In Candida albicans (Yeast), this protein is Serine/threonine-protein kinase CLA4 (CLA4).